The sequence spans 180 residues: Acireductone dioxygenase (180 aa).

H97, H99, E103, and H141 together coordinate Fe(2+). The Ni(2+) site is built by H97, H99, E103, and H141.

It belongs to the acireductone dioxygenase (ARD) family. In terms of assembly, monomer. The cofactor is Fe(2+). Ni(2+) serves as cofactor.

The enzyme catalyses 1,2-dihydroxy-5-(methylsulfanyl)pent-1-en-3-one + O2 = 3-(methylsulfanyl)propanoate + CO + formate + 2 H(+). It carries out the reaction 1,2-dihydroxy-5-(methylsulfanyl)pent-1-en-3-one + O2 = 4-methylsulfanyl-2-oxobutanoate + formate + 2 H(+). It participates in amino-acid biosynthesis; L-methionine biosynthesis via salvage pathway; L-methionine from S-methyl-5-thio-alpha-D-ribose 1-phosphate: step 5/6. Catalyzes 2 different reactions between oxygen and the acireductone 1,2-dihydroxy-3-keto-5-methylthiopentene (DHK-MTPene) depending upon the metal bound in the active site. Fe-containing acireductone dioxygenase (Fe-ARD) produces formate and 2-keto-4-methylthiobutyrate (KMTB), the alpha-ketoacid precursor of methionine in the methionine recycle pathway. Ni-containing acireductone dioxygenase (Ni-ARD) produces methylthiopropionate, carbon monoxide and formate, and does not lie on the methionine recycle pathway. The protein is Acireductone dioxygenase of Yersinia enterocolitica serotype O:8 / biotype 1B (strain NCTC 13174 / 8081).